The sequence spans 1079 residues: Electrogenic sodium bicarbonate cotransporter 1 (1079 aa).

The interval 1 to 62 is required for interaction with AHCYL1; it reads MEDEAVLDRG…EKKEKERISE (62 aa). The Cytoplasmic portion of the chain corresponds to 1–466; sequence MEDEAVLDRG…FASDFYDALN (466 aa). Position 2 is a phosphoserine (Glu2). At Tyr30 the chain carries Phosphotyrosine. The segment covering 39–52 has biased composition (basic residues); it reads YRRRRRHKRKAGHK. The disordered stretch occupies residues 39 to 78; that stretch reads YRRRRRHKRKAGHKEKKEKERISENYSDKSDVENADESSS. Over residues 53 to 70 the composition is skewed to basic and acidic residues; that stretch reads EKKEKERISENYSDKSDV. Phosphoserine occurs at positions 61, 65, 68, 223, 232, 233, and 245. Residues 235–266 form a disordered region; it reads SRMFSNPDNGSPAMTHRNLTSSSLNDISDKPE. Phosphothreonine is present on residues Thr249 and Thr254. The span at 251–260 shows a compositional bias: polar residues; sequence RNLTSSSLND. Phosphoserine is present on residues Ser256, Ser257, and Ser262. Residues 467-491 traverse the membrane as a helical segment; sequence IQALSAILFIYLATVTNAITFGGLL. At 492–501 the chain is on the extracellular side; that stretch reads GDATDNMQGV. A helical transmembrane segment spans residues 502-520; the sequence is LESFLGTAVSGAIFCLFAG. Gln521 is a topological domain (cytoplasmic). A discontinuously helical membrane pass occupies residues 522-542; it reads PLTILSSTGPVLVFERLLFNF. The Extracellular segment spans residues 543–550; that stretch reads SKDHSFDY. The chain crosses the membrane as a helical span at residues 551-571; it reads LEFRLWIGLWSAFMCLILVAT. Residues 572 to 585 lie on the Cytoplasmic side of the membrane; sequence DASFLVQYFTRFTE. Residues 586–609 form a helical membrane-spanning segment; sequence EGFSSLISFIFIYDAFKKMIKLAD. N-linked (GlcNAc) asparagine glycosylation is found at Ile597 and Phe617. Residues 610–692 lie on the Extracellular side of the membrane; sequence YYPINSDFRV…GNNCDFVPDI (83 aa). Residues 693-710 traverse the membrane as a helical segment; sequence TLMSFILFLGTYTSSMAM. At 711–725 the chain is on the cytoplasmic side; it reads KKFKTSRYFPTTARK. Residues 726 to 745 traverse the membrane as a helical segment; sequence LISDFAIILSILIFCVIDAL. The Extracellular portion of the chain corresponds to 746–779; the sequence is VGVDTPKLIVPSEFKPTSPHRGWFVPPFGGNPWW. The interaction with CA4 stretch occupies residues 748-779; sequence VDTPKLIVPSEFKPTSPHRGWFVPPFGGNPWW. A helical transmembrane segment spans residues 780–807; sequence VCLAAAIPALLVTILIFMDQQITAVIVN. Residues 808–819 are Cytoplasmic-facing; the sequence is RKEHKLKKGAGY. A helical membrane pass occupies residues 820 to 836; it reads HLDLFWVAILMVVCSFM. Residue Ala837 is a topological domain, extracellular. The chain crosses the membrane as a discontinuously helical span at residues 838-855; sequence LPWYVAATVISIAHIDSL. Residues 856-877 are Cytoplasmic-facing; sequence KMETETSAPGEQPKFLGVREQR. A helical transmembrane segment spans residues 878–894; the sequence is VTGTLVFILTGLSVFMA. Residues 895-901 are Extracellular-facing; it reads PILKFIP. The helical transmembrane segment at 902 to 918 threads the bilayer; it reads MPVLYGVFLYMGVASLN. Residues 919–960 lie on the Cytoplasmic side of the membrane; sequence GVQFMDRLKLLLMPLKHQPDFIYLRHVPLRRVHLFTSLQVLC. Residues 961–986 constitute an intramembrane region (discontinuously helical); the sequence is LALLWILKSTVAAIIFPVMILALVAV. Residues 987 to 1079 lie on the Cytoplasmic side of the membrane; the sequence is RKGMDYLFSQ…STFLERHTSC (93 aa). Residues 1002-1004 form a CA2-binding region; that stretch reads LDD. The segment at 1012–1079 is disordered; sequence KKKEDEKKKK…STFLERHTSC (68 aa). 2 positions are modified to phosphoserine: Ser1026 and Ser1029. Phosphoserine; by PKA is present on Ser1026. Residues 1030 to 1033 are CA2-binding; it reads DNDD. Ser1034 and Ser1044 each carry phosphoserine. A required for basolateral targeting region spans residues 1057–1059; the sequence is FLS. Phosphoserine occurs at positions 1060, 1064, 1069, and 1078. Residues 1062-1079 are compositionally biased toward basic and acidic residues; sequence KPLDRERSSTFLERHTSC.

It belongs to the anion exchanger (TC 2.A.31) family. In terms of assembly, homodimer. Interacts with CA2/carbonic anhydrase 2 and CA4/carbonic anhydrase 4 which may regulate transporter activity. Isoform 1 but not isoform 2 interacts with AHCYL1 (via PEST domain when phosphorylated); the interaction increases SLC4A4 isoform 1 activity. Interacts with AHCYL2. Phosphorylation of Ser-1026 by PKA increases the binding of CA2 and changes the Na(+):HCO3(-) stoichiometry of the transporter from 3:1 to 2:1. Phosphorylated in presence of STK39 and dephosphorylated in presence of PP1 phosphatase; phosphorylation seems to inhibit SLC4A4 activity. In terms of processing, N-glycosylation is not necessary for the transporter basic functions. Specifically expressed in kidney and to a lower extent in liver, lung, spleen, brain, skeletal muscle and heart. In kidney, expressed in proximal tubules at the corticomedullary junction. Isoform 2 is specifically expressed in kidney. Isoform 1 is expressed in kidney and pancreas while isoform 3 is specifically expressed in brain (at protein level). In brain, isoform 1 is expressed in astrocytes while isoform 3 is expressed in neurons (at protein level). In the eye, isoform 1 is expressed in cornea, conjunctiva, lens epithelium, ciliary bodies and retina while isoform 2 is detected only in the conjunctiva.

Its subcellular location is the basolateral cell membrane. The protein localises to the cell membrane. The catalysed reaction is 2 hydrogencarbonate(out) + Na(+)(out) = 2 hydrogencarbonate(in) + Na(+)(in). The enzyme catalyses 3 hydrogencarbonate(out) + Na(+)(out) = 3 hydrogencarbonate(in) + Na(+)(in). Inhibited by 4,4'-diisothiocyanatostilbene-2,2'-disulfonic acid (DIDS). Its function is as follows. Electrogenic sodium/bicarbonate cotransporter with a Na(+):HCO3(-) stoichiometry varying from 1:2 to 1:3. May regulate bicarbonate influx/efflux at the basolateral membrane of cells and regulate intracellular pH. The chain is Electrogenic sodium bicarbonate cotransporter 1 (Slc4a4) from Rattus norvegicus (Rat).